Reading from the N-terminus, the 507-residue chain is ATP synthase subunit alpha, chloroplastic (507 aa).

170 to 177 (GDRQTGKT) is a binding site for ATP.

This sequence belongs to the ATPase alpha/beta chains family. In terms of assembly, F-type ATPases have 2 components, CF(1) - the catalytic core - and CF(0) - the membrane proton channel. CF(1) has five subunits: alpha(3), beta(3), gamma(1), delta(1), epsilon(1). CF(0) has four main subunits: a, b, b' and c.

It localises to the plastid. Its subcellular location is the chloroplast thylakoid membrane. It catalyses the reaction ATP + H2O + 4 H(+)(in) = ADP + phosphate + 5 H(+)(out). In terms of biological role, produces ATP from ADP in the presence of a proton gradient across the membrane. The alpha chain is a regulatory subunit. The sequence is that of ATP synthase subunit alpha, chloroplastic from Nandina domestica (Heavenly bamboo).